Consider the following 380-residue polypeptide: MSHKTKPSTQERKAGKPSAPKRKVISKSPNSKLKTIVKGQKNTAVKAQTSKPLHPRNVHNKGYDFPALIAAFAALKSFVKPNPYGNLSIDFADPQAVKMLNAALLKLHYDVEHWDIPAGFLCPPIPGRADYIHYVADLLAVKKSSKKRVPKGPRVKVLDIGTGANVIYPLLGIQSYGWSFVGSDVDPLSIANAQQVFASNPAIAARFNSRLQTNAKHVFHGVIEPNERFDITLCNPPFHASLAEASEGTARKLKNLAANRAKSSEAKPLRSTKPVVTKTETPLNFGGQKAELWCEGGELQFLQTMISESHEFASQCLWFTTLVSKKENLKPAKALLAKVKAEEVKEMEMHQGNKITRVLAWTFLKPEQRELWAQYRDVEN.

The tract at residues 1–32 is disordered; sequence MSHKTKPSTQERKAGKPSAPKRKVISKSPNSK.

The protein belongs to the methyltransferase superfamily. METTL16/RlmF family.

It is found in the cytoplasm. The enzyme catalyses adenosine(1618) in 23S rRNA + S-adenosyl-L-methionine = N(6)-methyladenosine(1618) in 23S rRNA + S-adenosyl-L-homocysteine + H(+). In terms of biological role, specifically methylates the adenine in position 1618 of 23S rRNA. The sequence is that of Ribosomal RNA large subunit methyltransferase F from Shewanella halifaxensis (strain HAW-EB4).